A 410-amino-acid polypeptide reads, in one-letter code: 2,3-bisphosphoglycerate-independent phosphoglycerate mutase (410 aa).

This sequence belongs to the BPG-independent phosphoglycerate mutase family. A-PGAM subfamily.

It carries out the reaction (2R)-2-phosphoglycerate = (2R)-3-phosphoglycerate. The protein operates within carbohydrate degradation; glycolysis; pyruvate from D-glyceraldehyde 3-phosphate: step 3/5. Functionally, catalyzes the interconversion of 2-phosphoglycerate and 3-phosphoglycerate. In Pyrococcus abyssi (strain GE5 / Orsay), this protein is 2,3-bisphosphoglycerate-independent phosphoglycerate mutase.